We begin with the raw amino-acid sequence, 183 residues long: Oligoribonuclease (183 aa).

One can recognise an Exonuclease domain in the interval 9–172 (LIWIDLEMTG…DDIRESIEEL (164 aa)). Residue Tyr-130 is part of the active site.

Belongs to the oligoribonuclease family.

The protein resides in the cytoplasm. 3'-to-5' exoribonuclease specific for small oligoribonucleotides. This chain is Oligoribonuclease, found in Haemophilus ducreyi (strain 35000HP / ATCC 700724).